A 555-amino-acid polypeptide reads, in one-letter code: Formate--tetrahydrofolate ligase (555 aa).

63-70 (TPAGEGKT) contacts ATP.

The protein belongs to the formate--tetrahydrofolate ligase family.

It carries out the reaction (6S)-5,6,7,8-tetrahydrofolate + formate + ATP = (6R)-10-formyltetrahydrofolate + ADP + phosphate. It functions in the pathway one-carbon metabolism; tetrahydrofolate interconversion. In Beijerinckia indica subsp. indica (strain ATCC 9039 / DSM 1715 / NCIMB 8712), this protein is Formate--tetrahydrofolate ligase.